The chain runs to 358 residues: Peptide chain release factor 1 (358 aa).

Q237 carries the N5-methylglutamine modification.

Belongs to the prokaryotic/mitochondrial release factor family. In terms of processing, methylated by PrmC. Methylation increases the termination efficiency of RF1.

It localises to the cytoplasm. Functionally, peptide chain release factor 1 directs the termination of translation in response to the peptide chain termination codons UAG and UAA. The chain is Peptide chain release factor 1 from Streptomyces griseus subsp. griseus (strain JCM 4626 / CBS 651.72 / NBRC 13350 / KCC S-0626 / ISP 5235).